Reading from the N-terminus, the 281-residue chain is MGAITLDGKATRDEIFVDLKQRVSELNASGRTPGLATILVGEDPGSQAYVRGKHSDCAKVGITSIRRDLPADISTATLNETIDELNANPDCTGYIVQLPLPKHLDENAALERIDPGKDADGLHPTNLGRLVLNTPAPLPCTPRGIVHLLRRYDVPIAGAHVVVIGRGVTVGRPLGLLLTRRSENATVTLCHTGTRDLPTLTRQADIIVAAVGVPHMLTADMVRPGAAVVDVGVSRVDGKLTGDVHPDVWEVAGHVSPNPGGVGPLTRAFLLTNVVELAEQR.

NADP(+)-binding positions include 165–167 (GRG), Thr192, and Val233.

This sequence belongs to the tetrahydrofolate dehydrogenase/cyclohydrolase family. As to quaternary structure, homodimer.

The catalysed reaction is (6R)-5,10-methylene-5,6,7,8-tetrahydrofolate + NADP(+) = (6R)-5,10-methenyltetrahydrofolate + NADPH. The enzyme catalyses (6R)-5,10-methenyltetrahydrofolate + H2O = (6R)-10-formyltetrahydrofolate + H(+). It functions in the pathway one-carbon metabolism; tetrahydrofolate interconversion. In terms of biological role, catalyzes the oxidation of 5,10-methylenetetrahydrofolate to 5,10-methenyltetrahydrofolate and then the hydrolysis of 5,10-methenyltetrahydrofolate to 10-formyltetrahydrofolate. This Mycobacterium marinum (strain ATCC BAA-535 / M) protein is Bifunctional protein FolD.